The sequence spans 190 residues: ATP synthase subunit delta (190 aa).

It belongs to the ATPase delta chain family. In terms of assembly, F-type ATPases have 2 components, F(1) - the catalytic core - and F(0) - the membrane proton channel. F(1) has five subunits: alpha(3), beta(3), gamma(1), delta(1), epsilon(1). F(0) has three main subunits: a(1), b(2) and c(10-14). The alpha and beta chains form an alternating ring which encloses part of the gamma chain. F(1) is attached to F(0) by a central stalk formed by the gamma and epsilon chains, while a peripheral stalk is formed by the delta and b chains.

It localises to the cell inner membrane. F(1)F(0) ATP synthase produces ATP from ADP in the presence of a proton or sodium gradient. F-type ATPases consist of two structural domains, F(1) containing the extramembraneous catalytic core and F(0) containing the membrane proton channel, linked together by a central stalk and a peripheral stalk. During catalysis, ATP synthesis in the catalytic domain of F(1) is coupled via a rotary mechanism of the central stalk subunits to proton translocation. In terms of biological role, this protein is part of the stalk that links CF(0) to CF(1). It either transmits conformational changes from CF(0) to CF(1) or is implicated in proton conduction. The polypeptide is ATP synthase subunit delta (Salinibacter ruber (strain DSM 13855 / M31)).